Here is a 540-residue protein sequence, read N- to C-terminus: [Co(II) methylated amine-specific corrinoid protein] reductase (540 aa).

4Fe-4S ferredoxin-type domains follow at residues 471–500 (IILEVPVEKCVYCKKCVKECPEAALEIVER) and 504–535 (RIAKYDSQKCLGTSCRRCVGVCPEDAIDITKL). The [4Fe-4S] cluster site is built by cysteine 480, cysteine 483, cysteine 486, cysteine 490, cysteine 513, cysteine 518, cysteine 521, and cysteine 525.

Monomer. Requires [4Fe-4S] cluster as cofactor.

The catalysed reaction is 2 Co(II)-[methylamine-specific corrinoid protein] + AH2 + ATP + H2O = 2 Co(I)-[methylamine-specific corrinoid protein] + A + ADP + phosphate + 3 H(+). The enzyme catalyses 2 Co(II)-[dimethylamine-specific corrinoid protein] + AH2 + ATP + H2O = 2 Co(I)-[dimethylamine-specific corrinoid protein] + A + ADP + phosphate + 3 H(+). It carries out the reaction 2 Co(II)-[trimethylamine-specific corrinoid protein] + AH2 + ATP + H2O = 2 Co(I)-[trimethylamine-specific corrinoid protein] + A + ADP + phosphate + 3 H(+). Its pathway is one-carbon metabolism; methanogenesis from methylamine. It participates in one-carbon metabolism; methanogenesis from dimethylamine. It functions in the pathway one-carbon metabolism; methanogenesis from trimethylamine. Functionally, reductase required for the activation of corrinoid-dependent methylamine methyltransferase reactions during methanogenesis. Mediates the ATP-dependent reduction of corrinoid proteins from the inactive cobalt(II) state to the active cobalt(I) state. Acts on the corrinoid proteins involved in methanogenesis from monomethylamine (MMA), dimethylamine (DMA) and trimethylamine (TMA), namely MtmC, MtbC and MttC, respectively. This is [Co(II) methylated amine-specific corrinoid protein] reductase from Methanosarcina barkeri.